The chain runs to 456 residues: Probable galactarate/D-glucarate transporter GudP (456 aa).

Transmembrane regions (helical) follow at residues 11–31 (YLIL…RATI), 51–71 (YIFS…GWLL), 78–96 (KVYA…LQGY), 102–119 (ISTA…VGLA), 246–266 (IYLG…WFPV), 280–300 (GIIA…GGVI), 317–337 (TPIV…YVDA), 341–361 (VVCF…GWAV), 381–401 (FGNL…AATG), and 408–428 (SSWV…VGEI).

This sequence belongs to the major facilitator superfamily. Phthalate permease family.

The protein resides in the cell inner membrane. It catalyses the reaction galactarate(in) + H(+)(in) = galactarate(out) + H(+)(out). The enzyme catalyses D-glucarate(in) + H(+)(in) = D-glucarate(out) + H(+)(out). Functionally, probably involved in the uptake of galactarate and/or D-glucarate. The sequence is that of Probable galactarate/D-glucarate transporter GudP (gudP) from Pseudomonas putida (Arthrobacter siderocapsulatus).